A 361-amino-acid chain; its full sequence is Riboflavin biosynthesis protein RibD (361 aa).

The CMP/dCMP-type deaminase domain occupies 1-122 (MEEYYMKLAL…MMKEAGIEVR (122 aa)). The interval 1 to 144 (MEEYYMKLAL…EKFLHFMRTG (144 aa)) is deaminase. H49 provides a ligand contact to Zn(2+). E51 (proton donor) is an active-site residue. Zn(2+)-binding residues include C74 and C83. Positions 145–361 (LPYVTLKAAA…IKLTAKPTKE (217 aa)) are reductase. A153 lines the NADP(+) pocket. S167 contributes to the substrate binding site. W169 lines the NADP(+) pocket. Residue R183 coordinates substrate. NADP(+) is bound by residues T195 and D199. Residues L203 and R206 each coordinate substrate. Residue T221 participates in NADP(+) binding. Residue E290 participates in substrate binding. An NADP(+)-binding site is contributed by 292-298 (GSAVHGS).

It in the N-terminal section; belongs to the cytidine and deoxycytidylate deaminase family. This sequence in the C-terminal section; belongs to the HTP reductase family. Homotetramer. It depends on Zn(2+) as a cofactor.

It carries out the reaction 2,5-diamino-6-hydroxy-4-(5-phosphoribosylamino)-pyrimidine + H2O + H(+) = 5-amino-6-(5-phospho-D-ribosylamino)uracil + NH4(+). The enzyme catalyses 5-amino-6-(5-phospho-D-ribitylamino)uracil + NADP(+) = 5-amino-6-(5-phospho-D-ribosylamino)uracil + NADPH + H(+). It functions in the pathway cofactor biosynthesis; riboflavin biosynthesis; 5-amino-6-(D-ribitylamino)uracil from GTP: step 2/4. Its pathway is cofactor biosynthesis; riboflavin biosynthesis; 5-amino-6-(D-ribitylamino)uracil from GTP: step 3/4. Functionally, converts 2,5-diamino-6-(ribosylamino)-4(3h)-pyrimidinone 5'-phosphate into 5-amino-6-(ribosylamino)-2,4(1h,3h)-pyrimidinedione 5'-phosphate. The polypeptide is Riboflavin biosynthesis protein RibD (ribD) (Bacillus subtilis (strain 168)).